The chain runs to 475 residues: Aspartyl/glutamyl-tRNA(Asn/Gln) amidotransferase subunit B (475 aa).

This sequence belongs to the GatB/GatE family. GatB subfamily. In terms of assembly, heterotrimer of A, B and C subunits.

The catalysed reaction is L-glutamyl-tRNA(Gln) + L-glutamine + ATP + H2O = L-glutaminyl-tRNA(Gln) + L-glutamate + ADP + phosphate + H(+). The enzyme catalyses L-aspartyl-tRNA(Asn) + L-glutamine + ATP + H2O = L-asparaginyl-tRNA(Asn) + L-glutamate + ADP + phosphate + 2 H(+). In terms of biological role, allows the formation of correctly charged Asn-tRNA(Asn) or Gln-tRNA(Gln) through the transamidation of misacylated Asp-tRNA(Asn) or Glu-tRNA(Gln) in organisms which lack either or both of asparaginyl-tRNA or glutaminyl-tRNA synthetases. The reaction takes place in the presence of glutamine and ATP through an activated phospho-Asp-tRNA(Asn) or phospho-Glu-tRNA(Gln). The protein is Aspartyl/glutamyl-tRNA(Asn/Gln) amidotransferase subunit B of Macrococcus caseolyticus (strain JCSC5402) (Macrococcoides caseolyticum).